The chain runs to 288 residues: Acetyl-coenzyme A carboxylase carboxyl transferase subunit beta (288 aa).

Residues 34 to 288 (LWVKCSRCNE…ANILSLHGTN (255 aa)) enclose the CoA carboxyltransferase N-terminal domain. The Zn(2+) site is built by C38, C41, C57, and C60. A C4-type zinc finger spans residues 38–60 (CSRCNEILYTKELDKNFKVCHKC).

It belongs to the AccD/PCCB family. In terms of assembly, acetyl-CoA carboxylase is a heterohexamer composed of biotin carboxyl carrier protein (AccB), biotin carboxylase (AccC) and two subunits each of ACCase subunit alpha (AccA) and ACCase subunit beta (AccD). It depends on Zn(2+) as a cofactor.

Its subcellular location is the cytoplasm. It catalyses the reaction N(6)-carboxybiotinyl-L-lysyl-[protein] + acetyl-CoA = N(6)-biotinyl-L-lysyl-[protein] + malonyl-CoA. It participates in lipid metabolism; malonyl-CoA biosynthesis; malonyl-CoA from acetyl-CoA: step 1/1. In terms of biological role, component of the acetyl coenzyme A carboxylase (ACC) complex. Biotin carboxylase (BC) catalyzes the carboxylation of biotin on its carrier protein (BCCP) and then the CO(2) group is transferred by the transcarboxylase to acetyl-CoA to form malonyl-CoA. This Desulforamulus reducens (strain ATCC BAA-1160 / DSM 100696 / MI-1) (Desulfotomaculum reducens) protein is Acetyl-coenzyme A carboxylase carboxyl transferase subunit beta.